Reading from the N-terminus, the 784-residue chain is DNA ligase (784 aa).

NAD(+) contacts are provided by residues 31–35 (DAEYD), 80–81 (SL), and E120. K122 serves as the catalytic N6-AMP-lysine intermediate. NAD(+) contacts are provided by R143, E180, K296, and K320. Zn(2+) is bound by residues C414, C417, C444, and C450. A BRCT domain is found at 701–784 (AEGLPLAGQT…AFMAEQGITL (84 aa)).

This sequence belongs to the NAD-dependent DNA ligase family. LigA subfamily. It depends on Mg(2+) as a cofactor. Requires Mn(2+) as cofactor.

It catalyses the reaction NAD(+) + (deoxyribonucleotide)n-3'-hydroxyl + 5'-phospho-(deoxyribonucleotide)m = (deoxyribonucleotide)n+m + AMP + beta-nicotinamide D-nucleotide.. Functionally, DNA ligase that catalyzes the formation of phosphodiester linkages between 5'-phosphoryl and 3'-hydroxyl groups in double-stranded DNA using NAD as a coenzyme and as the energy source for the reaction. It is essential for DNA replication and repair of damaged DNA. The sequence is that of DNA ligase from Pseudomonas entomophila (strain L48).